Consider the following 129-residue polypeptide: D-ribose pyranase (129 aa).

His20 serves as the catalytic Proton donor. Residues Asp28, His96, and 118 to 120 (YAN) contribute to the substrate site.

This sequence belongs to the RbsD / FucU family. RbsD subfamily. As to quaternary structure, homodecamer.

It localises to the cytoplasm. The enzyme catalyses beta-D-ribopyranose = beta-D-ribofuranose. It participates in carbohydrate metabolism; D-ribose degradation; D-ribose 5-phosphate from beta-D-ribopyranose: step 1/2. Catalyzes the interconversion of beta-pyran and beta-furan forms of D-ribose. This Exiguobacterium sibiricum (strain DSM 17290 / CCUG 55495 / CIP 109462 / JCM 13490 / 255-15) protein is D-ribose pyranase.